Reading from the N-terminus, the 276-residue chain is uncharacterized protein (276 aa).

Positions 20–137 (PVLIFIPGAN…PPINTFLPDS (118 aa)) constitute an AB hydrolase-1 domain. A disordered region spans residues 57–76 (GESELTEPLPDSASNPDSDY).

The protein belongs to the AB hydrolase superfamily.

This is an uncharacterized protein from Staphylococcus aureus (strain USA300).